Reading from the N-terminus, the 251-residue chain is Aquaporin (251 aa).

Topologically, residues 1–11 are cytoplasmic; it reads MAGETLRKIQS. Residues 12–32 form a helical membrane-spanning segment; that stretch reads LLGEMVASFIFGFAVYSAILG. Residues 33 to 42 are Extracellular-facing; it reads STIAQQPAAK. A helical membrane pass occupies residues 43-63; that stretch reads VIIGLTVGFSAIGIIYSFSDV. The Cytoplasmic segment spans residues 64 to 86; it reads TIAHFNPAITLAAILTGKMGILC. The short motif at 69-71 is the NPA element; sequence NPA. Residues 87-107 form a helical membrane-spanning segment; the sequence is GLGYMLAQCVGFILAVCALLV. Residues 108–133 lie on the Extracellular side of the membrane; that stretch reads CSPVGYKETLNVIRPAPAPFGADNLN. A helical membrane pass occupies residues 134 to 154; sequence VFFTEFFLTAILVHIAFAVAV. Residues 155–179 lie on the Cytoplasmic side of the membrane; that stretch reads NPYRPKVDTDGKFVDPDEKEPVDRR. Residues 180–200 form a helical membrane-spanning segment; the sequence is ITAPLCIGLTLGFLAFMGLVT. Over 201–224 the chain is Extracellular; sequence SGGAFNPGLTLAPVIMSNTWQHFW. Residues 206 to 208 carry the NPG motif; that stretch reads NPG. The chain crosses the membrane as a helical span at residues 225 to 245; that stretch reads LYLGAQYLGGLVGGLLQVFVL. The Cytoplasmic segment spans residues 246–251; sequence YKLSSN.

The protein belongs to the MIP/aquaporin (TC 1.A.8) family.

It localises to the cell membrane. Its function is as follows. Water channel required to facilitate the transport of water across membranes. Involved in osmotolerance. In Encephalitozoon hellem (Microsporidian parasite), this protein is Aquaporin (AQP).